A 64-amino-acid chain; its full sequence is Translation machinery-associated protein 7 (64 aa).

The interval M1–K64 is disordered. Residues D21–K50 are a coiled coil. Residues V27–K44 show a composition bias toward basic and acidic residues.

The protein belongs to the TMA7 family.

The chain is Translation machinery-associated protein 7 (tma7) from Tetraodon nigroviridis (Spotted green pufferfish).